The following is a 484-amino-acid chain: TPR repeat-containing protein YvcD (484 aa).

3 TPR repeats span residues G21–D54, S55–E88, and W187–N220.

The chain is TPR repeat-containing protein YvcD (yvcD) from Bacillus subtilis (strain 168).